The sequence spans 450 residues: NAD-specific glutamate dehydrogenase (450 aa).

3 residues coordinate substrate: Lys90, Gln111, and Lys114. Lys126 acts as the Proton donor in catalysis. Residue Gly165 coordinates substrate. Residues Thr210 and Asn241 each coordinate NAD(+). Substrate is bound at residue Ser381.

It belongs to the Glu/Leu/Phe/Val dehydrogenases family. As to quaternary structure, homohexamer.

It catalyses the reaction L-glutamate + NAD(+) + H2O = 2-oxoglutarate + NH4(+) + NADH + H(+). It functions in the pathway amino-acid degradation; L-glutamate degradation via hydroxyglutarate pathway; crotonoyl-CoA from L-glutamate: step 1/5. This is NAD-specific glutamate dehydrogenase (gdh) from Clostridium symbiosum (Bacteroides symbiosus).